Reading from the N-terminus, the 364-residue chain is Mitogen-activated protein kinase 11 (364 aa).

Residues 24-308 enclose the Protein kinase domain; that stretch reads LQGLRPVGSG…AAEALAHAYF (285 aa). Residues 30-38 and K53 contribute to the ATP site; that span reads VGSGAYGSV. E71 is a nilotinib binding site. D150 serves as the catalytic Proton acceptor. At T180 the chain carries Phosphothreonine; by MAP2K3, MAP2K4 and MAP2K6. Positions 180-182 match the TXY motif; it reads TGY. Y182 bears the Phosphotyrosine; by MAP2K3, MAP2K4 and MAP2K6 mark. Disordered stretches follow at residues 311 to 331 and 343 to 364; these read YHDP…EAKE and QEVL…EIEQ. The span at 314 to 326 shows a compositional bias: acidic residues; it reads PEDEPEAEPYDES. Phosphotyrosine; by ZAP70 is present on Y323.

The protein belongs to the protein kinase superfamily. CMGC Ser/Thr protein kinase family. MAP kinase subfamily. In terms of assembly, interacts with HDAC3 and DUSP16. Mg(2+) is required as a cofactor. Post-translationally, dually phosphorylated on Thr-180 and Tyr-182 by MAP2K3/MKK3, MAP2K4/MKK4 and MAP2K6/MKK6, which activates the enzyme. As to expression, highest levels in the brain and heart. Also expressed in the placenta, lung, liver, skeletal muscle, kidney and pancreas.

It localises to the cytoplasm. The protein resides in the nucleus. It catalyses the reaction L-seryl-[protein] + ATP = O-phospho-L-seryl-[protein] + ADP + H(+). The enzyme catalyses L-threonyl-[protein] + ATP = O-phospho-L-threonyl-[protein] + ADP + H(+). Activated by phosphorylation on threonine and tyrosine by MAP2K3/MKK3, MAP2K4/MKK4 and MAP2K6/MKK6. MAP2K3/MKK3 and MAP2K6/MKK6 are both essential for the activation of MAPK11 induced by environmental stress. HDAC3 interacts directly and selectively with MAPK11 to repress ATF2 transcriptional activity, and regulate TNF gene expression in LPS-stimulated cells. Inhibited by SB203580 and pyridinyl-imidazole related compounds. Functionally, serine/threonine kinase which acts as an essential component of the MAP kinase signal transduction pathway. MAPK11 is one of the four p38 MAPKs which play an important role in the cascades of cellular responses evoked by extracellular stimuli such as pro-inflammatory cytokines or physical stress leading to direct activation of transcription factors. Accordingly, p38 MAPKs phosphorylate a broad range of proteins and it has been estimated that they may have approximately 200 to 300 substrates each. MAPK11 functions are mostly redundant with those of MAPK14. Some of the targets are downstream kinases which are activated through phosphorylation and further phosphorylate additional targets. RPS6KA5/MSK1 and RPS6KA4/MSK2 can directly phosphorylate and activate transcription factors such as CREB1, ATF1, the NF-kappa-B isoform RELA/NFKB3, STAT1 and STAT3, but can also phosphorylate histone H3 and the nucleosomal protein HMGN1. RPS6KA5/MSK1 and RPS6KA4/MSK2 play important roles in the rapid induction of immediate-early genes in response to stress or mitogenic stimuli, either by inducing chromatin remodeling or by recruiting the transcription machinery. On the other hand, two other kinase targets, MAPKAPK2/MK2 and MAPKAPK3/MK3, participate in the control of gene expression mostly at the post-transcriptional level, by phosphorylating ZFP36 (tristetraprolin) and ELAVL1, and by regulating EEF2K, which is important for the elongation of mRNA during translation. MKNK1/MNK1 and MKNK2/MNK2, two other kinases activated by p38 MAPKs, regulate protein synthesis by phosphorylating the initiation factor EIF4E2. In the cytoplasm, the p38 MAPK pathway is an important regulator of protein turnover. For example, CFLAR is an inhibitor of TNF-induced apoptosis whose proteasome-mediated degradation is regulated by p38 MAPK phosphorylation. Ectodomain shedding of transmembrane proteins is regulated by p38 MAPKs as well. In response to inflammatory stimuli, p38 MAPKs phosphorylate the membrane-associated metalloprotease ADAM17. Such phosphorylation is required for ADAM17-mediated ectodomain shedding of TGF-alpha family ligands, which results in the activation of EGFR signaling and cell proliferation. Additional examples of p38 MAPK substrates are the FGFR1. FGFR1 can be translocated from the extracellular space into the cytosol and nucleus of target cells, and regulates processes such as rRNA synthesis and cell growth. FGFR1 translocation requires p38 MAPK activation. In the nucleus, many transcription factors are phosphorylated and activated by p38 MAPKs in response to different stimuli. Classical examples include ATF1, ATF2, ATF6, ELK1, PTPRH, DDIT3, TP53/p53 and MEF2C and MEF2A. The p38 MAPKs are emerging as important modulators of gene expression by regulating chromatin modifiers and remodelers. The promoters of several genes involved in the inflammatory response, such as IL6, IL8 and IL12B, display a p38 MAPK-dependent enrichment of histone H3 phosphorylation on 'Ser-10' (H3S10ph) in LPS-stimulated myeloid cells. This phosphorylation enhances the accessibility of the cryptic NF-kappa-B-binding sites marking promoters for increased NF-kappa-B recruitment. Phosphorylates NLRP1 downstream of MAP3K20/ZAK in response to UV-B irradiation and ribosome collisions, promoting activation of the NLRP1 inflammasome and pyroptosis. Phosphorylates methyltransferase DOT1L on 'Ser-834', 'Thr-900', 'Ser-902', 'Thr-984', 'Ser-1001', 'Ser-1009' and 'Ser-1104'. The polypeptide is Mitogen-activated protein kinase 11 (MAPK11) (Homo sapiens (Human)).